An 823-amino-acid polypeptide reads, in one-letter code: Leucine--tRNA ligase (823 aa).

A 'HIGH' region motif is present at residues 42 to 52 (PYPSGTLHMGH). A 'KMSKS' region motif is present at residues 575 to 579 (KMSKS). Lys578 contacts ATP.

Belongs to the class-I aminoacyl-tRNA synthetase family.

The protein resides in the cytoplasm. The catalysed reaction is tRNA(Leu) + L-leucine + ATP = L-leucyl-tRNA(Leu) + AMP + diphosphate. The sequence is that of Leucine--tRNA ligase from Legionella pneumophila (strain Paris).